The following is a 208-amino-acid chain: MSAILGKKIGMTSLFDENRKAIPCTVIEAGPCFVSQVKTVDKDGYAAYQICFDKKKENRTAKPQLGHFQKSGVEPSYKMSEFRKEIFADELNAGDEVKVSIFKEGDTVKVSGVSKGKGFAGVVKRYHFGGGSKTHGQSDRLRAPGSVGGSSFPSRTFKGQRMAGRKGSDSVTIRGLKVVKVLPESNLLVIKGAVPGPNNSYLEIVTSK.

The tract at residues 130-168 (GGSKTHGQSDRLRAPGSVGGSSFPSRTFKGQRMAGRKGS) is disordered.

It belongs to the universal ribosomal protein uL3 family. As to quaternary structure, part of the 50S ribosomal subunit. Forms a cluster with proteins L14 and L19.

In terms of biological role, one of the primary rRNA binding proteins, it binds directly near the 3'-end of the 23S rRNA, where it nucleates assembly of the 50S subunit. The sequence is that of Large ribosomal subunit protein uL3 from Chloroherpeton thalassium (strain ATCC 35110 / GB-78).